We begin with the raw amino-acid sequence, 255 residues long: tRNA (guanine-N(7)-)-methyltransferase (255 aa).

Residues 1 to 31 (MMHDDPNEAGLPPHNDAIPDETAEGADEVNP) are disordered. A compositionally biased stretch (acidic residues) spans 18–27 (IPDETAEGAD). Positions 86, 111, 138, and 161 each coordinate S-adenosyl-L-methionine. The active site involves Asp161. Substrate contacts are provided by residues Lys165, Asp197, and 232 to 235 (TKFE).

Belongs to the class I-like SAM-binding methyltransferase superfamily. TrmB family.

It carries out the reaction guanosine(46) in tRNA + S-adenosyl-L-methionine = N(7)-methylguanosine(46) in tRNA + S-adenosyl-L-homocysteine. It functions in the pathway tRNA modification; N(7)-methylguanine-tRNA biosynthesis. In terms of biological role, catalyzes the formation of N(7)-methylguanine at position 46 (m7G46) in tRNA. The chain is tRNA (guanine-N(7)-)-methyltransferase from Burkholderia cenocepacia (strain HI2424).